The sequence spans 328 residues: Versiconal hemiacetal acetate esterase (328 aa).

Positions 82-84 (HGG) match the Involved in the stabilization of the negatively charged intermediate by the formation of the oxyanion hole motif. Catalysis depends on residues S156, D260, and H290.

It belongs to the 'GDXG' lipolytic enzyme family.

The enzyme catalyses (2S,3S)-versiconal hemiacetal acetate + H2O = (2S-3S)-versiconal hemiacetal + acetate + H(+). The catalysed reaction is (3S)-versiconol acetate + H2O = (S)-versiconol + acetate + H(+). The protein operates within mycotoxin biosynthesis. In terms of biological role, versiconal hemiacetal acetate esterase; part of the fragmented gene cluster that mediates the biosynthesis of dothistromin (DOTH), a polyketide toxin very similar in structure to the aflatoxin precursor, versicolorin B. The first step of the pathway is the conversion of acetate to norsolorinic acid (NOR) and requires the fatty acid synthase subunits hexA and hexB, as well as the polyketide synthase pksA. PksA combines a hexanoyl starter unit and 7 malonyl-CoA extender units to synthesize the precursor NOR. The hexanoyl starter unit is provided to the acyl-carrier protein (ACP) domain by the fungal fatty acid synthase hexA/hexB. The second step is the conversion of NOR to averantin (AVN) and requires the norsolorinic acid ketoreductase nor1, which catalyzes the dehydration of norsolorinic acid to form (1'S)-averantin. The cytochrome P450 monooxygenase avnA then catalyzes the hydroxylation of AVN to 5'hydroxyaverantin (HAVN). The next step is performed by adhA that transforms HAVN to averufin (AVF). Averufin might then be converted to hydroxyversicolorone by cypX and avfA. Hydroxyversicolorone is further converted versiconal hemiacetal acetate (VHA) by moxY. VHA is then the substrate for the versiconal hemiacetal acetate esterase est1 to yield versiconal (VAL). Versicolorin B synthase vbsA then converts VAL to versicolorin B (VERB) by closing the bisfuran ring. Then, the activity of the versicolorin B desaturase verB leads to versicolorin A (VERA). DotB, a predicted chloroperoxidase, may perform epoxidation of the A-ring of VERA. Alternatively, a cytochrome P450, such as cypX or avnA could catalyze this step. It is also possible that another, uncharacterized, cytochrome P450 enzyme is responsible for this step. Opening of the epoxide could potentially be achieved by the epoxide hydrolase epoA. However, epoA seems not to be required for DOTH biosynthesis, but other epoxide hydrolases may have the ability to complement this hydrolysis. Alternatively, opening of the epoxide ring could be achieved non-enzymatically. The next step is the deoxygenation of ring A to yield the 5,8-dihydroxyanthraquinone which is most likely catalyzed by the NADPH dehydrogenase encoded by ver1. The last stages of DOTH biosynthesis are proposed to involve hydroxylation of the bisfuran. OrdB and norB might have oxidative roles here. An alternative possibility is that cytochrome P450 monoogenases such as avnA and cypX might perform these steps in addition to previously proposed steps. This chain is Versiconal hemiacetal acetate esterase, found in Dothistroma septosporum (strain NZE10 / CBS 128990) (Red band needle blight fungus).